Here is a 213-residue protein sequence, read N- to C-terminus: Holliday junction resolvase RecU (213 aa).

Mg(2+) contacts are provided by T99, D101, E114, and Q133.

It belongs to the RecU family. The cofactor is Mg(2+).

The protein resides in the cytoplasm. The catalysed reaction is Endonucleolytic cleavage at a junction such as a reciprocal single-stranded crossover between two homologous DNA duplexes (Holliday junction).. In terms of biological role, endonuclease that resolves Holliday junction intermediates in genetic recombination. Cleaves mobile four-strand junctions by introducing symmetrical nicks in paired strands. Promotes annealing of linear ssDNA with homologous dsDNA. Required for DNA repair, homologous recombination and chromosome segregation. This chain is Holliday junction resolvase RecU, found in Lactococcus lactis subsp. cremoris (strain SK11).